We begin with the raw amino-acid sequence, 360 residues long: Peptide chain release factor 1 (360 aa).

N5-methylglutamine is present on Gln-234.

Belongs to the prokaryotic/mitochondrial release factor family. Methylated by PrmC. Methylation increases the termination efficiency of RF1.

Its subcellular location is the cytoplasm. Peptide chain release factor 1 directs the termination of translation in response to the peptide chain termination codons UAG and UAA. This is Peptide chain release factor 1 from Clostridium botulinum (strain Eklund 17B / Type B).